A 94-amino-acid chain; its full sequence is Small ribosomal subunit protein uS19 (94 aa).

Belongs to the universal ribosomal protein uS19 family.

Functionally, protein S19 forms a complex with S13 that binds strongly to the 16S ribosomal RNA. This chain is Small ribosomal subunit protein uS19, found in Natranaerobius thermophilus (strain ATCC BAA-1301 / DSM 18059 / JW/NM-WN-LF).